The primary structure comprises 348 residues: tRNA pseudouridine synthase D (348 aa).

Asp81 functions as the Nucleophile in the catalytic mechanism. The TRUD domain maps to 158–304 (GVPNYFGAQR…MRHERRSIEL (147 aa)).

It belongs to the pseudouridine synthase TruD family.

The enzyme catalyses uridine(13) in tRNA = pseudouridine(13) in tRNA. In terms of biological role, responsible for synthesis of pseudouridine from uracil-13 in transfer RNAs. The chain is tRNA pseudouridine synthase D from Aliivibrio salmonicida (strain LFI1238) (Vibrio salmonicida (strain LFI1238)).